Reading from the N-terminus, the 289-residue chain is Bifunctional aminodeoxychorismate lyase / D-amino acid transaminase (289 aa).

Arg50 contacts pyridoxal 5'-phosphate. Residue Lys149 is modified to N6-(pyridoxal phosphate)lysine. Residues Tyr153, Thr216, and Thr217 each contribute to the pyridoxal 5'-phosphate site. A 2-oxoglutarate-binding site is contributed by Ser252. Pyridoxal 5'-phosphate is bound at residue Ser253. 2 residues coordinate 2-oxoglutarate: Met254 and Thr255.

The protein belongs to the class-IV pyridoxal-phosphate-dependent aminotransferase family. In terms of assembly, homodimer. Pyridoxal 5'-phosphate is required as a cofactor.

It catalyses the reaction 4-amino-4-deoxychorismate = 4-aminobenzoate + pyruvate + H(+). It carries out the reaction D-alanine + 2-oxoglutarate = D-glutamate + pyruvate. Its pathway is cofactor biosynthesis; tetrahydrofolate biosynthesis; 4-aminobenzoate from chorismate: step 2/2. It participates in cell wall biogenesis; peptidoglycan biosynthesis. Functionally, bifunctional enzyme that catalyzes two enzymatic reactions in biochemically unrelated pathways: acts as an aminodeoxychorismate (ADC) lyase (ADCL) in folate biosynthesis, converting 4-amino-4-deoxychorismate (ADC) to 4-aminobenzoate (PABA), and as a D-amino acid transaminase (DAAT) in peptidoglycan (PG) biosynthesis. DAAT activity is strictly restricted to D-alanine and D-glutamate. May function as a metabolic toggle that alternates between ADCL and DAAT activity, prioritizing the former over the latter in response to substrate accumulation. Bifunctionality of this enzyme provides a failsafe mechanism for a metabolic coupling between nucleic acid and cell wall biosynthesis that appears to ensure prioritization of PABA production over D-alanine/D-glutamate biosynthesis. In Mycobacterium tuberculosis (strain ATCC 25618 / H37Rv), this protein is Bifunctional aminodeoxychorismate lyase / D-amino acid transaminase.